Reading from the N-terminus, the 108-residue chain is Tetrahydromethanopterin S-methyltransferase subunit B (108 aa).

The helical transmembrane segment at phenylalanine 81–leucine 101 threads the bilayer.

Belongs to the MtrB family. The complex is composed of 8 subunits; MtrA, MtrB, MtrC, MtrD, MtrE, MtrF, MtrG and MtrH.

The protein resides in the cell membrane. It catalyses the reaction 5-methyl-5,6,7,8-tetrahydromethanopterin + coenzyme M + 2 Na(+)(in) = 5,6,7,8-tetrahydromethanopterin + methyl-coenzyme M + 2 Na(+)(out). The protein operates within one-carbon metabolism; methanogenesis from CO(2); methyl-coenzyme M from 5,10-methylene-5,6,7,8-tetrahydromethanopterin: step 2/2. Part of a complex that catalyzes the formation of methyl-coenzyme M and tetrahydromethanopterin from coenzyme M and methyl-tetrahydromethanopterin. This is an energy-conserving, sodium-ion translocating step. In Methanococcus aeolicus (strain ATCC BAA-1280 / DSM 17508 / OCM 812 / Nankai-3), this protein is Tetrahydromethanopterin S-methyltransferase subunit B.